A 232-amino-acid polypeptide reads, in one-letter code: Enolase-phosphatase E1 (232 aa).

It belongs to the HAD-like hydrolase superfamily. MasA/MtnC family. As to quaternary structure, monomer. Mg(2+) serves as cofactor.

It catalyses the reaction 5-methylsulfanyl-2,3-dioxopentyl phosphate + H2O = 1,2-dihydroxy-5-(methylsulfanyl)pent-1-en-3-one + phosphate. It participates in amino-acid biosynthesis; L-methionine biosynthesis via salvage pathway; L-methionine from S-methyl-5-thio-alpha-D-ribose 1-phosphate: step 3/6. Its pathway is amino-acid biosynthesis; L-methionine biosynthesis via salvage pathway; L-methionine from S-methyl-5-thio-alpha-D-ribose 1-phosphate: step 4/6. Functionally, bifunctional enzyme that catalyzes the enolization of 2,3-diketo-5-methylthiopentyl-1-phosphate (DK-MTP-1-P) into the intermediate 2-hydroxy-3-keto-5-methylthiopentenyl-1-phosphate (HK-MTPenyl-1-P), which is then dephosphorylated to form the acireductone 1,2-dihydroxy-3-keto-5-methylthiopentene (DHK-MTPene). This is Enolase-phosphatase E1 from Acidiphilium cryptum (strain JF-5).